A 424-amino-acid polypeptide reads, in one-letter code: Chitinase CLP (424 aa).

Residues 1–18 (MSLHLLLAVSLCVALASS) form the signal peptide. The Peptidase A1 domain maps to 43-405 (AATSLYTVPI…DEEKQRLGFS (363 aa)). Asn-139, Asn-345, and Asn-419 each carry an N-linked (GlcNAc...) asparagine glycan.

The protein belongs to the peptidase A1 family. As to expression, expressed in roots. Expressed at low levels in leaf sheaths, stems and flowers.

It localises to the secreted. It is found in the extracellular space. Its subcellular location is the apoplast. The enzyme catalyses Random endo-hydrolysis of N-acetyl-beta-D-glucosaminide (1-&gt;4)-beta-linkages in chitin and chitodextrins.. In terms of biological role, chitinase that possesses antifungal activity. Inhibits the growth of the fungal pathogen Rhizoctonia solani by degrading the fungal cell wall. Does not possess inhibiting activity against fungal endo-1,4-beta-D-xylanases belonging to glycoside hydrolase family 10 (GH10) and family 11 (GH11). Involved in the regulation of plant growth by regulating the intracellular calcium ion concentration in roots. This chain is Chitinase CLP, found in Oryza sativa subsp. japonica (Rice).